The sequence spans 239 residues: Orotidine 5'-phosphate decarboxylase (239 aa).

Substrate-binding positions include D11, K33, 60–69 (DLKFHDIPTT), T117, R178, Q187, G207, and R208. The active-site Proton donor is the K62.

It belongs to the OMP decarboxylase family. Type 1 subfamily. As to quaternary structure, homodimer.

The catalysed reaction is orotidine 5'-phosphate + H(+) = UMP + CO2. The protein operates within pyrimidine metabolism; UMP biosynthesis via de novo pathway; UMP from orotate: step 2/2. Catalyzes the decarboxylation of orotidine 5'-monophosphate (OMP) to uridine 5'-monophosphate (UMP). This is Orotidine 5'-phosphate decarboxylase from Nitrosospira multiformis (strain ATCC 25196 / NCIMB 11849 / C 71).